Consider the following 215-residue polypeptide: UPF0502 protein YceH (215 aa).

Residue Lys-80 is modified to N6-acetyllysine.

It belongs to the UPF0502 family.

In Escherichia coli (strain K12 / MC4100 / BW2952), this protein is UPF0502 protein YceH.